Consider the following 330-residue polypeptide: Glycerol-3-phosphate dehydrogenase [NAD(P)+] (330 aa).

Positions 10, 11, 31, and 105 each coordinate NADPH. Positions 105, 135, and 137 each coordinate sn-glycerol 3-phosphate. An NADPH-binding site is contributed by Ala-139. Lys-190, Asp-243, Ser-253, Arg-254, and Asn-255 together coordinate sn-glycerol 3-phosphate. Residue Lys-190 is the Proton acceptor of the active site. An NADPH-binding site is contributed by Arg-254. The NADPH site is built by Val-278 and Glu-280.

Belongs to the NAD-dependent glycerol-3-phosphate dehydrogenase family.

The protein resides in the cytoplasm. It catalyses the reaction sn-glycerol 3-phosphate + NAD(+) = dihydroxyacetone phosphate + NADH + H(+). The catalysed reaction is sn-glycerol 3-phosphate + NADP(+) = dihydroxyacetone phosphate + NADPH + H(+). Its pathway is membrane lipid metabolism; glycerophospholipid metabolism. Functionally, catalyzes the reduction of the glycolytic intermediate dihydroxyacetone phosphate (DHAP) to sn-glycerol 3-phosphate (G3P), the key precursor for phospholipid synthesis. This is Glycerol-3-phosphate dehydrogenase [NAD(P)+] from Solidesulfovibrio magneticus (strain ATCC 700980 / DSM 13731 / RS-1) (Desulfovibrio magneticus).